Here is a 97-residue protein sequence, read N- to C-terminus: CRISPR-associated endoribonuclease Cas2 1 (97 aa).

Asp12 contacts Mg(2+).

Belongs to the CRISPR-associated endoribonuclease Cas2 protein family. Homodimer, forms a heterotetramer with a Cas1 homodimer. Requires Mg(2+) as cofactor.

CRISPR (clustered regularly interspaced short palindromic repeat) is an adaptive immune system that provides protection against mobile genetic elements (viruses, transposable elements and conjugative plasmids). CRISPR clusters contain sequences complementary to antecedent mobile elements and target invading nucleic acids. CRISPR clusters are transcribed and processed into CRISPR RNA (crRNA). Functions as a ssRNA-specific endoribonuclease. Involved in the integration of spacer DNA into the CRISPR cassette. This is CRISPR-associated endoribonuclease Cas2 1 from Francisella tularensis subsp. novicida (strain U112).